Consider the following 162-residue polypeptide: Beta-carotene hydroxylase (162 aa).

The region spanning 8-135 (VATVLVMELT…GRDHCVSFGF (128 aa)) is the Fatty acid hydroxylase domain.

It belongs to the sterol desaturase family.

It carries out the reaction all-trans-beta-carotene + 4 reduced [2Fe-2S]-[ferredoxin] + 2 O2 + 4 H(+) = all-trans-zeaxanthin + 4 oxidized [2Fe-2S]-[ferredoxin] + 2 H2O. The protein operates within carotenoid biosynthesis; astaxanthin biosynthesis. Functionally, catalyzes the hydroxylation reaction from beta-carotene to zeaxanthin via beta-cryptoxanthin. The polypeptide is Beta-carotene hydroxylase (crtZ) (Paracoccus sp. (strain PC1) (Alcaligenes sp. (strain PC1))).